A 42-amino-acid chain; its full sequence is Photosystem I reaction center subunit IX (42 aa).

Residues 7-27 (YLSTAPVLAAIWFGILAGLLI) traverse the membrane as a helical segment.

Belongs to the PsaJ family.

It localises to the plastid. The protein resides in the chloroplast thylakoid membrane. In terms of biological role, may help in the organization of the PsaE and PsaF subunits. This chain is Photosystem I reaction center subunit IX, found in Staurastrum punctulatum (Green alga).